The primary structure comprises 93 residues: Putative regulatory protein Clos_1422 (93 aa).

Belongs to the RemA family.

In Alkaliphilus oremlandii (strain OhILAs) (Clostridium oremlandii (strain OhILAs)), this protein is Putative regulatory protein Clos_1422.